Consider the following 285-residue polypeptide: Acetylglutamate kinase (285 aa).

Residues 64–65, Arg86, and Asn181 contribute to the substrate site; that span reads GG.

This sequence belongs to the acetylglutamate kinase family. ArgB subfamily.

It localises to the cytoplasm. It carries out the reaction N-acetyl-L-glutamate + ATP = N-acetyl-L-glutamyl 5-phosphate + ADP. It participates in amino-acid biosynthesis; L-arginine biosynthesis; N(2)-acetyl-L-ornithine from L-glutamate: step 2/4. Catalyzes the ATP-dependent phosphorylation of N-acetyl-L-glutamate. This chain is Acetylglutamate kinase, found in Clostridium beijerinckii (strain ATCC 51743 / NCIMB 8052) (Clostridium acetobutylicum).